Consider the following 750-residue polypeptide: Dual specificity tyrosine-phosphorylation-regulated kinase 1A (750 aa).

Disordered stretches follow at residues 56 to 81 (ALPY…RDPA) and 104 to 129 (YAKK…KVYN). The Bipartite nuclear localization signal signature appears at 109 to 126 (RRHQQGQGDDSSHKKERK). A Protein kinase domain is found at 151–471 (YEIDSLIGKG…PYYALQHSFF (321 aa)). ATP-binding positions include 157-165 (IGKGSFGQV), K180, and 230-233 (FEML). The Proton acceptor role is filled by D279. 4 disordered regions span residues 400–434 (TKDG…AGES), 477–531 (EGTN…RHSG), 583–666 (SQKN…GNQA), and 731–750 (DRED…VASS). A compositionally biased stretch (polar residues) spans 477-493 (EGTNTSNSVSTSPAMEQ). Low complexity predominate over residues 494-517 (SQSSGTTSSTSSSSGGSSGTSNSG). Residues 584-612 (QKNVPHHHGNGSHHHHHHHHHHHGQHILS) form a histidine-rich domain (HRD) region. Positions 587–608 (VPHHHGNGSHHHHHHHHHHHGQ) are enriched in basic residues. Positions 610–621 (ILSNRTRTRIYN) are enriched in polar residues. Residues 622–659 (SPSTSSSTQDSMDIGNSHHSMTSLSSSTTSSSTSSSST) show a composition bias toward low complexity. A compositionally biased stretch (polar residues) spans 741–750 (CVQQSPVASS).

It belongs to the protein kinase superfamily. CMGC Ser/Thr protein kinase family. MNB/DYRK subfamily. Autophosphorylated on tyrosine residues.

The protein localises to the nucleus. It localises to the nucleus speckle. It carries out the reaction L-seryl-[protein] + ATP = O-phospho-L-seryl-[protein] + ADP + H(+). The catalysed reaction is L-threonyl-[protein] + ATP = O-phospho-L-threonyl-[protein] + ADP + H(+). It catalyses the reaction L-tyrosyl-[protein] + ATP = O-phospho-L-tyrosyl-[protein] + ADP + H(+). The enzyme catalyses [DNA-directed RNA polymerase] + ATP = phospho-[DNA-directed RNA polymerase] + ADP + H(+). Dual-specificity kinase which possesses both serine/threonine and tyrosine kinase activities. Exhibits a substrate preference for proline at position P+1 and arginine at position P-3. Plays an important role in double-strand breaks (DSBs) repair following DNA damage. Mechanistically, phosphorylates RNF169 and increases its ability to block accumulation of TP53BP1 at the DSB sites thereby promoting homologous recombination repair (HRR). Also acts as a positive regulator of transcription by acting as a CTD kinase that mediates phosphorylation of the CTD (C-terminal domain) of the large subunit of RNA polymerase II (RNAP II) POLR2A. Modulates alternative splicing by phosphorylating the splice factor SRSF6. Phosphorylates SEPTIN4, SEPTIN5 and SF3B1. This Xenopus laevis (African clawed frog) protein is Dual specificity tyrosine-phosphorylation-regulated kinase 1A.